A 99-amino-acid polypeptide reads, in one-letter code: A-type ATP synthase subunit F (99 aa).

This sequence belongs to the V-ATPase F subunit family. In terms of assembly, has multiple subunits with at least A(3), B(3), C, D, E, F, H, I and proteolipid K(x).

It is found in the cell membrane. In terms of biological role, component of the A-type ATP synthase that produces ATP from ADP in the presence of a proton gradient across the membrane. This Methanococcoides burtonii (strain DSM 6242 / NBRC 107633 / OCM 468 / ACE-M) protein is A-type ATP synthase subunit F.